Reading from the N-terminus, the 446-residue chain is Lysine histidine transporter 1 (446 aa).

Residues M1–K37 are Cytoplasmic-facing. The chain crosses the membrane as a helical span at residues W38–P58. Residues Y59–Q63 lie on the Extracellular side of the membrane. Residues L64–L84 form a helical membrane-spanning segment. Residues W85–G115 are Cytoplasmic-facing. Residues L116 to V136 traverse the membrane as a helical segment. Residues T137 to K157 lie on the Extracellular side of the membrane. The helical transmembrane segment at L158–F178 threads the bilayer. The Cytoplasmic segment spans residues N179–S180. The helical transmembrane segment at I181–A201 threads the bilayer. The Extracellular portion of the chain corresponds to S202–N227. The helical transmembrane segment at F228 to I248 threads the bilayer. The Cytoplasmic segment spans residues Q249–V268. A helical transmembrane segment spans residues I269–I289. Residues F290–P305 are Extracellular-facing. A helical membrane pass occupies residues A306–I326. Topologically, residues Y327–R352 are cytoplasmic. Residues F353–G375 traverse the membrane as a helical segment. Residues L376–A378 are Extracellular-facing. Residues F379 to Y401 traverse the membrane as a helical segment. The Cytoplasmic portion of the chain corresponds to K402–S409. The helical transmembrane segment at W410–G430 threads the bilayer. Topologically, residues G431 to S446 are extracellular.

It belongs to the amino acid/polyamine transporter 2 family. Amino acid/auxin permease (AAAP) (TC 2.A.18.2) subfamily. Expressed in roots, stems, flowers, leaves, siliques and pollen. Found in the tips of roots and in the rhizodermis of emerging roots and in lateral roots. Higher expression in older leaves as compared to joung leaves. Detected first at the hydathodes, then in the epidermis and finally in matures leaves in all mesophyll cells. Not detected in vascular bundles or in seeds.

The protein resides in the cell membrane. Inhibited by carbonlycyanide m-chlorophenylhydrazone (CCCP) and DEPC. In terms of biological role, amino acid-proton symporter. Transporter with a broad specificity for histidine, lysine, glutamic acid, alanine, serine, proline and glycine. Involved in both apoplastic transport of amino acids in leaves and their uptake by roots. The sequence is that of Lysine histidine transporter 1 (LHT1) from Arabidopsis thaliana (Mouse-ear cress).